Reading from the N-terminus, the 273-residue chain is Cell division protein FtsQ (273 aa).

Topologically, residues 1-10 (MWNDARTINL) are cytoplasmic. A helical membrane pass occupies residues 11-31 (IANTLAVLAVAAMLLAGVAWV). Residues 32-273 (AQRPYFTLAA…HSKSKPAKKR (242 aa)) lie on the Periplasmic side of the membrane. The 74-residue stretch at 37–110 (FTLAAIEIES…NTLRVRVEEQ (74 aa)) folds into the POTRA domain.

Belongs to the FtsQ/DivIB family. FtsQ subfamily. As to quaternary structure, part of a complex composed of FtsB, FtsL and FtsQ.

Its subcellular location is the cell inner membrane. Essential cell division protein. May link together the upstream cell division proteins, which are predominantly cytoplasmic, with the downstream cell division proteins, which are predominantly periplasmic. May control correct divisome assembly. The chain is Cell division protein FtsQ from Bordetella pertussis (strain Tohama I / ATCC BAA-589 / NCTC 13251).